We begin with the raw amino-acid sequence, 76 residues long: MQVLVRDNNVDQALRALKKKMQREGIFREMKMRGHYEKPSEKRAREKAEAVRRARKLARKRAQREGLVSGRPAAAR.

A compositionally biased stretch (basic and acidic residues) spans 35 to 52 (HYEKPSEKRAREKAEAVR). The interval 35–76 (HYEKPSEKRAREKAEAVRRARKLARKRAQREGLVSGRPAAAR) is disordered. Residues 53 to 62 (RARKLARKRA) show a composition bias toward basic residues.

This sequence belongs to the bacterial ribosomal protein bS21 family.

The sequence is that of Small ribosomal subunit protein bS21A from Chelativorans sp. (strain BNC1).